The chain runs to 125 residues: MKKRRGPSEDENPRPEKLFTQKVFDYISRVILKYFKKTYKFIIYILKNLTLFKILYKCFPYIKNFILKIDKIFFHVLIKSINFIKYIPQLIHDKIFEFFWFILKIFQILIFVKIFKYVIKKFIIY.

The protein localises to the plastid. This is an uncharacterized protein from Euglena longa (Euglenophycean alga).